The chain runs to 605 residues: Leucine aminopeptidase (605 aa).

Residues Lys-374, Asp-379, and Lys-386 each contribute to the a peptide site. Positions 374 and 379 each coordinate Zn(2+). Residues 384–401 (NLKAAPGSMIDLMKFDMS) form an L13 loop region. Residue Lys-386 is part of the active site. Residues Asp-394, Met-396, Asp-399, Asp-459, and Glu-461 each contribute to the Zn(2+) site. Positions 399 and 459 each coordinate a peptide. The active site involves Arg-463.

This sequence belongs to the peptidase M17 family. Homohexamer composed of dimer of trimers. Both the identity and concentration of metal ions available dictate the extent to which oligomerization occurs; Mn(2+) and Co(2+) induces oligomerization, whereas Mg(2+) has no effect, and Zn(2+) causes irreversible protein aggregation in vitro. Requires Zn(2+) as cofactor.

Its subcellular location is the cytoplasm. It carries out the reaction Release of an N-terminal amino acid, Xaa-|-Yaa-, in which Xaa is preferably Leu, but may be other amino acids including Pro although not Arg or Lys, and Yaa may be Pro. Amino acid amides and methyl esters are also readily hydrolyzed, but rates on arylamides are exceedingly low.. It catalyses the reaction L-cysteinylglycine + H2O = L-cysteine + glycine. Its activity is regulated as follows. Oligomerization is required for catalytic activity and is metal-dependent. The type of metal that binds the 2 metal binding sites influences catalytic activity and substrate specificity. In vitro, activated by Co(2+), Mn(2+), Ni(2+), Mg(2+) and Zn(2+) with decreasing strength. Occupancy of the site 2 is essential and sufficient for activating the enzyme but occupation of the 2 sites is necessary for full catalytic activity. Inhibited by fungal metabolite bestatin. Inhibited by Phe-Naphthyl (PNAP). Aminopeptidase which preferentially cleaves leucine residues from the N-terminus of peptides. Also, has some activity towards tryptophan and methionine and to a lesser extent towards phenylalanine. Has very low activity or no activity towards the other amino acids. In addition, cleaves the Cys-Gly dipeptide, probably as part of the glutathione regulation pathway; cleavage only occurs in the presence of Mn(2+). During the asexual blood stage, plays a role in the final step of host hemoglobin catabolism, by cleaving hemoglobin-derived oligopeptides providing a source of amino acids for the parasite protein synthesis and for the maintenance of osmotic homeostasis. During the asexual blood stage, may also play a role during the ring-trophozoite transition. The sequence is that of Leucine aminopeptidase from Plasmodium falciparum (isolate 3D7).